Consider the following 417-residue polypeptide: XO lethal protein 1 (417 aa).

The disordered stretch occupies residues 373 to 417 (VSPGETSSEGISDEHHYEEYDEDDIMEEEEAPSARQDDTYDEDEE). Positions 391 to 403 (EYDEDDIMEEEEA) are enriched in acidic residues.

Belongs to the GHMP kinase family. Xol-1 subfamily.

The protein localises to the nucleus. Its function is as follows. Sex-determining factor that is required for sexual differentiation and X chromosome dosage compensation to promote male development. High expression during gastrulation triggers male development, while low expression at that time triggers hermaphrodite development. Although related to GHMP kinase, its mode of action remains unclear. This chain is XO lethal protein 1, found in Caenorhabditis elegans.